The chain runs to 525 residues: GMP synthase [glutamine-hydrolyzing] (525 aa).

The region spanning arginine 9–leucine 207 is the Glutamine amidotransferase type-1 domain. Cysteine 86 (nucleophile) is an active-site residue. Residues histidine 181 and glutamate 183 contribute to the active site. A GMPS ATP-PPase domain is found at tryptophan 208–arginine 400. ATP is bound at residue serine 235–serine 241.

As to quaternary structure, homodimer.

It carries out the reaction XMP + L-glutamine + ATP + H2O = GMP + L-glutamate + AMP + diphosphate + 2 H(+). Its pathway is purine metabolism; GMP biosynthesis; GMP from XMP (L-Gln route): step 1/1. Catalyzes the synthesis of GMP from XMP. The protein is GMP synthase [glutamine-hydrolyzing] of Salmonella typhimurium (strain LT2 / SGSC1412 / ATCC 700720).